A 449-amino-acid chain; its full sequence is Elongation factor 1-alpha (449 aa).

A tr-type G domain is found at 5-234 (KQHVSIVVIG…DNCDPPKRPV (230 aa)). The G1 stretch occupies residues 14–21 (GHVDSGKS). A GTP-binding site is contributed by 14–21 (GHVDSGKS). Lys-55 bears the N6,N6-dimethyllysine mark. A G2 region spans residues 70–74 (GITID). Residue Lys-79 is modified to N6,N6,N6-trimethyllysine. Residues 91–94 (DAPG) are G3. Residues 91–95 (DAPGH) and 153–156 (NKMD) each bind GTP. Residues 153–156 (NKMD) form a G4 region. Residue Lys-187 is modified to N6,N6,N6-trimethyllysine. The segment at 194–196 (SGW) is G5. The residue at position 265 (Lys-265) is an N6-methyllysine. An N6,N6,N6-trimethyllysine mark is found at Lys-310 and Lys-400.

The protein belongs to the TRAFAC class translation factor GTPase superfamily. Classic translation factor GTPase family. EF-Tu/EF-1A subfamily.

The protein localises to the cytoplasm. Its function is as follows. This protein promotes the GTP-dependent binding of aminoacyl-tRNA to the A-site of ribosomes during protein biosynthesis. This is Elongation factor 1-alpha from Pyropia yezoensis (Susabi-nori).